The sequence spans 410 residues: Lipid droplet-regulating VLDL assembly factor AUP1 (410 aa).

An N-acetylmethionine modification is found at Met-1. Residues 1 to 20 (MEPPPAPGPERLFDSHRLPS) lie on the Cytoplasmic side of the membrane. An intramembrane segment occupies 21 to 41 (DGFLLLALLLYAPVGLCLLVL). The Cytoplasmic segment spans residues 42-410 (RLFLGLHVFL…FRERQAQEAE (369 aa)). The tract at residues 259 to 293 (LTPADKAEHMKRQRHPRLRPQSVQSSFPSPPSPSS) is disordered. Ser-292 is subject to Phosphoserine. In terms of domain architecture, CUE spans 296-338 (QLTILAQRVKEVLPHVPLNVIQRDLARTGCVDLTITNLLEGAV). The tract at residues 348–367 (GSQSLPTASAPKFPSSGLVT) is disordered. Ser-363 is modified (phosphoserine). Residue Thr-367 is modified to Phosphothreonine.

This sequence belongs to the AUP1 family. In terms of assembly, identified in a complex that contains SEL1L, OS9, FAF2/UBXD8, UBE2J1/UBC6E and AUP1. Interacts with the cytoplasmic tail of ITGA2B, ITGA1, ITGA2, ITGA5, ITGAV and ITGAM. Interacts (via C-terminus) with UBE2G2; the interaction recruits UBE2G2 to lipid droplets. Interacts with ubiquitin ligases AMFR/gp78 and RNF139/TRC8; this promotes interaction of UBE2G2 with AMFR and RNF139. Interacts with apolipoprotein APOB. In terms of processing, monoubiquitinated and diubiquitinated.

Its subcellular location is the endoplasmic reticulum membrane. The protein resides in the lipid droplet. Plays a role in the translocation of terminally misfolded proteins from the endoplasmic reticulum lumen to the cytoplasm and their degradation by the proteasome. Plays a role in lipid droplet formation. Induces lipid droplet clustering. Recruits ubiquitin-conjugating enzyme UBE2G2 to lipid droplets which facilitates its interaction with ubiquitin ligases AMFR/gp78 and RNF139/TRC8, leading to sterol-induced ubiquitination of HMGCR and its subsequent proteasomal degradation. Also required for the degradation of INSIG1, SREBF1 and SREBF2. Plays a role in regulating assembly and secretion of very low density lipoprotein particles and stability of apolipoprotein APOB. In Rattus norvegicus (Rat), this protein is Lipid droplet-regulating VLDL assembly factor AUP1.